Reading from the N-terminus, the 112-residue chain is uncharacterized protein (112 aa).

The next 3 helical transmembrane spans lie at 33 to 53 (PSPLLLSLLLHYTVLFSPFGA), 58 to 78 (LYIYIYIYIYIYIYMCINVCT), and 91 to 111 (CVYVCTHFNIYIHTYIYLLFV).

It is found in the membrane. This is an uncharacterized protein from Saccharomyces cerevisiae (strain ATCC 204508 / S288c) (Baker's yeast).